The primary structure comprises 547 residues: Glucose-6-phosphate isomerase (547 aa).

The Proton donor role is filled by E353. Residues H384 and K512 contribute to the active site.

Belongs to the GPI family.

Its subcellular location is the cytoplasm. The enzyme catalyses alpha-D-glucose 6-phosphate = beta-D-fructose 6-phosphate. The protein operates within carbohydrate biosynthesis; gluconeogenesis. It participates in carbohydrate degradation; glycolysis; D-glyceraldehyde 3-phosphate and glycerone phosphate from D-glucose: step 2/4. Its function is as follows. Catalyzes the reversible isomerization of glucose-6-phosphate to fructose-6-phosphate. The sequence is that of Glucose-6-phosphate isomerase from Pseudoalteromonas atlantica (strain T6c / ATCC BAA-1087).